A 217-amino-acid chain; its full sequence is Variable small protein 22 (217 aa).

An N-terminal signal peptide occupies residues 1–18 (MRKRISAIIMTLFMVFMS). The N-palmitoyl cysteine moiety is linked to residue Cys-19. Residue Cys-19 is the site of S-diacylglycerol cysteine attachment. Positions 151–174 (LGKNDASDDDTKKAIKKDNSDKTK) are disordered. A compositionally biased stretch (basic and acidic residues) spans 155 to 174 (DASDDDTKKAIKKDNSDKTK).

The protein belongs to the variable small protein (Vsp) family.

It localises to the cell outer membrane. The Vlp and Vsp proteins are antigenically distinct proteins, only one vlp or vsp gene is transcriptionally active at any one time. Switching between these genes is a mechanism of host immune response evasion. The polypeptide is Variable small protein 22 (Borrelia hermsii).